A 199-amino-acid polypeptide reads, in one-letter code: Chaperone protein TorD (199 aa).

It belongs to the TorD/DmsD family. TorD subfamily.

The protein localises to the cytoplasm. In terms of biological role, involved in the biogenesis of TorA. Acts on TorA before the insertion of the molybdenum cofactor and, as a result, probably favors a conformation of the apoenzyme that is competent for acquiring the cofactor. The chain is Chaperone protein TorD from Escherichia coli (strain K12 / MC4100 / BW2952).